The sequence spans 209 residues: Guanylyl cyclase-activating protein 3 (209 aa).

Gly-2 is lipidated: N-myristoyl glycine. Position 3 is a deamidated asparagine (Asn-3). EF-hand domains are found at residues 15-50 (PTQE…QGLN), 52-87 (KANK…IMQE), 88-123 (KMEQ…VQAL), and 130-165 (SPEE…DQDL). Ca(2+)-binding residues include Asp-65, Asn-67, Asp-69, Glu-76, Asp-101, Asp-103, Asn-105, Ser-107, Glu-112, Asp-143, Asn-145, Asp-147, Glu-149, and Glu-154. The segment at 187-209 (QPDMETDSSKSPDKAGLGKVKMK) is disordered.

In terms of tissue distribution, retina.

Functionally, stimulates guanylyl cyclase 1 (GC1) and GC2 when free calcium ions concentration is low and inhibits guanylyl cyclases when free calcium ions concentration is elevated. This Ca(2+)-sensitive regulation of guanylyl cyclase (GC) is a key event in recovery of the dark state of rod photoreceptors following light exposure. This chain is Guanylyl cyclase-activating protein 3 (GUCA1C), found in Homo sapiens (Human).